The primary structure comprises 421 residues: GTPase Obg (421 aa).

In terms of domain architecture, Obg spans 4–161; the sequence is LHFIDEAFNE…FKIKIQLKVL (158 aa). The region spanning 162 to 327 is the OBG-type G domain; it reads ADVGLLGFPS…LKYAIKNLLQ (166 aa). GTP contacts are provided by residues 168 to 175, 193 to 197, 214 to 217, 281 to 284, and 308 to 310; these read GFPSVGKS, FTTLF, DLPG, NKMD, and SLI. Mg(2+) is bound by residues serine 175 and threonine 195. Residues 343 to 421 enclose the OCT domain; the sequence is DLNSETQTFT…ICNYLFDFVI (79 aa).

This sequence belongs to the TRAFAC class OBG-HflX-like GTPase superfamily. OBG GTPase family. Monomer. Requires Mg(2+) as cofactor.

It localises to the cytoplasm. Functionally, an essential GTPase which binds GTP, GDP and possibly (p)ppGpp with moderate affinity, with high nucleotide exchange rates and a fairly low GTP hydrolysis rate. Plays a role in control of the cell cycle, stress response, ribosome biogenesis and in those bacteria that undergo differentiation, in morphogenesis control. This chain is GTPase Obg, found in Phytoplasma australiense.